The chain runs to 1091 residues: E3 ubiquitin-protein ligase TRIM33 (1091 aa).

Residues 1 to 13 (MADNKGGGGGGGE) are compositionally biased toward gly residues. Residues 1–87 (MADNKGGGGG…SATPASSSSS (87 aa)) are disordered. A compositionally biased stretch (low complexity) spans 52 to 87 (APVAAVPTDTPAEENPAPSSSSVASSSATPASSSSS). The RING-type 1 zinc-finger motif lies at 97–154 (CAVCKLSLQSRDTEPKLLPCLHSFCRRCLPEPERQLSVPGGTNGDIQQVGVIRCLVCR). The segment at 180 to 227 (KSEQVCTSCEDNASAVGFCVECGEWLCKTCIEAHQRVKFTKDHIITNK) adopts a B box-type 1; atypical zinc-finger fold. Zn(2+)-binding residues include Cys-185, Cys-188, Cys-209, His-213, Cys-245, His-248, Cys-268, and His-273. The B box-type 2 zinc-finger motif lies at 240-281 (QRPVFCPVHKQEQLKLFCETCDRLTCRDCQLLEHKEHRYQFL). A coiled-coil region spans residues 269 to 361 (QLLEHKEHRY…QLESVTKERQ (93 aa)). 2 disordered regions span residues 672-779 (LPQP…TPPL) and 821-844 (GKSA…GSNK). Positions 675-721 (PTSNMNPSPAPSAMSPGSTGLSNSHTPVRPPSTSSTGSRGSCGSSSR) are enriched in low complexity. A compositionally biased stretch (basic and acidic residues) spans 754 to 763 (KQEKAEDGRR). A compositionally biased stretch (low complexity) spans 768–779 (LSSPESSLTPPL). A PHD-type zinc finger spans residues 850–897 (EDWCAVCQNGGDLLCCEKCPKVFHLTCHVPTLLSFPSGEWICTFCRDL). A Bromo domain is found at 920-1043 (GLSPVDQMKC…LYFEEKLPAI (124 aa)). The interval 1051–1091 (PLPEFEAEDDDGDVTDDSDDDDFVQPRRKRLKSEERPVHIK) is disordered. The segment covering 1055-1073 (FEAEDDDGDVTDDSDDDDF) has biased composition (acidic residues). Residues 1082 to 1091 (KSEERPVHIK) are compositionally biased toward basic and acidic residues.

As to quaternary structure, may interact with smad4.

The protein localises to the nucleus. The enzyme catalyses S-ubiquitinyl-[E2 ubiquitin-conjugating enzyme]-L-cysteine + [acceptor protein]-L-lysine = [E2 ubiquitin-conjugating enzyme]-L-cysteine + N(6)-ubiquitinyl-[acceptor protein]-L-lysine.. Its pathway is protein modification; protein ubiquitination. Functionally, acts as an E3 ubiquitin-protein ligase for smad4. Promotes ectoderm embryonic development at the expense of other germ layers. Inhibits mesodermal differentiation. Promotes neural development of the ectoderm. Promotes smad4 alpha degradation via the ubiquitin proteasome pathway. May act as a transcriptional repressor. This Xenopus laevis (African clawed frog) protein is E3 ubiquitin-protein ligase TRIM33 (trim33).